A 302-amino-acid polypeptide reads, in one-letter code: Haloalkane dehalogenase (302 aa).

The region spanning 48-152 (PILLMHGEPS…VVVSNTGLPI (105 aa)) is the AB hydrolase-1 domain. Asp-123 functions as the Nucleophile in the catalytic mechanism. Asp-249 (proton donor) is an active-site residue. His-278 (proton acceptor) is an active-site residue.

The protein belongs to the haloalkane dehalogenase family. Type 1 subfamily. In terms of assembly, monomer.

It catalyses the reaction 1-haloalkane + H2O = a halide anion + a primary alcohol + H(+). In terms of biological role, catalyzes hydrolytic cleavage of carbon-halogen bonds in halogenated aliphatic compounds, leading to the formation of the corresponding primary alcohols, halide ions and protons. This is Haloalkane dehalogenase from Caulobacter vibrioides (strain ATCC 19089 / CIP 103742 / CB 15) (Caulobacter crescentus).